A 434-amino-acid chain; its full sequence is Serine/threonine transporter SstT (434 aa).

9 consecutive transmembrane segments (helical) span residues 14–34, 41–61, 72–92, 135–155, 172–192, 210–230, 282–302, 316–336, and 351–371; these read IVIG…WSFI, FVGA…MSAI, FGTV…AAVA, ALVE…GSGL, TVSA…VGLL, LLML…PFMV, ISIP…VSIM, IFLA…VSGI, and FGIS…IGVV. The tract at residues 414-434 is disordered; that stretch reads KGTAEVVTPEKANEAEESEQV.

Belongs to the dicarboxylate/amino acid:cation symporter (DAACS) (TC 2.A.23) family.

It localises to the cell membrane. It carries out the reaction L-serine(in) + Na(+)(in) = L-serine(out) + Na(+)(out). The catalysed reaction is L-threonine(in) + Na(+)(in) = L-threonine(out) + Na(+)(out). Involved in the import of serine and threonine into the cell, with the concomitant import of sodium (symport system). This Lacticaseibacillus paracasei (strain ATCC 334 / BCRC 17002 / CCUG 31169 / CIP 107868 / KCTC 3260 / NRRL B-441) (Lactobacillus paracasei) protein is Serine/threonine transporter SstT.